The primary structure comprises 336 residues: Potassium channel subfamily K member 1 (336 aa).

The Cytoplasmic portion of the chain corresponds to 1–20; it reads MLQSLAGSSCVRLVERHRSA. A helical transmembrane segment spans residues 21 to 41; sequence WCFGFLVLGYLLYLVFGAVVF. At 42–103 the chain is on the extracellular side; it reads SSVELPYEDL…SNASGNWNWD (62 aa). The N-linked (GlcNAc...) asparagine glycan is linked to asparagine 95. An intramembrane region (helical) is located at residues 104-116; that stretch reads FASALFFASTVLS. An intramembrane segment occupies 117–122; the sequence is TTGYGH. Residues 117–122 are selectivity filter 1; that stretch reads TTGYGH. Residues 123–132 are Extracellular-facing; the sequence is TVPLSDGGKA. Residues 133–156 form a helical membrane-spanning segment; it reads FCIIYSVIGIPFTLLFLTAVVQRV. At 157 to 181 the chain is on the cytoplasmic side; that stretch reads TVHVTRRPVLYFHVRWGFSKQVVAI. Residues 182 to 202 form a helical membrane-spanning segment; sequence VHAVLLGLITVSCFFFIPAAV. The Extracellular portion of the chain corresponds to 203–211; sequence FSVLEDDWN. The segment at residues 212–224 is an intramembrane region (helical); it reads FLESFYFCFISLS. Positions 225–230 are selectivity filter 2; it reads TIGLGD. An intramembrane segment occupies 225–231; it reads TIGLGDY. Over 232-243 the chain is Extracellular; it reads VPGEGYNQKFRE. A helical membrane pass occupies residues 244–267; the sequence is LYKIGITCYLLLGLIAMLVVLETF. The Cytoplasmic segment spans residues 268-336; that stretch reads CELHELKKFR…SACADGPANH (69 aa). A Glycyl lysine isopeptide (Lys-Gly) (interchain with G-Cter in SUMO) cross-link involves residue lysine 274. The important for intracellular retention in recycling endosomes stretch occupies residues 293-299; the sequence is IIEHDQL. The interval 315-336 is disordered; sequence QKQNEPFVATPSSACADGPANH. Residue serine 326 is modified to Phosphoserine.

The protein belongs to the two pore domain potassium channel (TC 1.A.1.8) family. Homodimer; disulfide-linked. Heterodimer with KCNK2; disulfide-linked. In astrocytes, forms mostly heterodimeric potassium channels with KCNK2, with only a minor proportion of functional channels containing homodimeric KCNK1. Interacts with KCNK3 and KCNK9, forming functional heterodimeric channels. Interacts with GNG4. Identified in a complex with PSD and ARF6; interacts only with PSD that is bound to ARF6. Interacts with UBE2I. Sumoylation is controversial. Sumoylated by UBE2I. Not sumoylated when expressed in xenopus oocytes or mammalian cells. Sumoylation inactivates the channel, but does not interfere with expression at the cell membrane. Sumoylation of a single subunit is sufficient to silence the dimeric channel. Sumoylation of KCNK1 is sufficient to silence heterodimeric channels formed by KCNK1 and KCNK3 or KCNK9. Desumoylated by SENP1; this activates the channel. Desumoylated by SENP1; this strongly increases halothane-mediated activation of heterodimeric channels formed with KCNK9. SENP1 treatment has no effect. Expressed in renal distal tubules, especially in cortical collecting duct and cortical thick ascending limb, with lower levels in the connecting tubule.

Its subcellular location is the cell membrane. The protein localises to the recycling endosome. It is found in the synaptic cell membrane. The protein resides in the cytoplasmic vesicle. It localises to the perikaryon. Its subcellular location is the cell projection. The protein localises to the dendrite. It is found in the apical cell membrane. It catalyses the reaction K(+)(in) = K(+)(out). It carries out the reaction NH4(+)(in) = NH4(+)(out). The catalysed reaction is Na(+)(in) = Na(+)(out). The enzyme catalyses Rb(+)(in) = Rb(+)(out). It catalyses the reaction Cs(+)(in) = Cs(+)(out). It carries out the reaction Li(+)(in) = Li(+)(out). The catalysed reaction is L-glutamate(out) = L-glutamate(in). The enzyme catalyses chloride(in) = chloride(out). Ion channel that contributes to passive transmembrane potassium transport and to the regulation of the resting membrane potential in brain astrocytes, but also in kidney and in other tissues. Forms dimeric channels through which potassium ions pass in accordance with their electrochemical gradient. The channel is selective for K(+) ions at physiological potassium concentrations and at neutral pH, but becomes permeable to Na(+) at subphysiological K(+) levels and upon acidification of the extracellular medium. The homodimer has very low potassium channel activity, when expressed in heterologous systems, and can function as weakly inward rectifying potassium channel. Channel activity is modulated by activation of serotonin receptors. Heterodimeric channels containing KCNK1 and KCNK2 have much higher activity, and may represent the predominant form in astrocytes. Heterodimeric channels containing KCNK1 and KCNK3 or KCNK9 have much higher activity. Heterodimeric channels formed by KCNK1 and KCNK9 may contribute to halothane-sensitive currents. Mediates outward rectifying potassium currents in dentate gyrus granule cells and contributes to the regulation of their resting membrane potential. Contributes to the regulation of action potential firing in dentate gyrus granule cells and down-regulates their intrinsic excitability. In astrocytes, the heterodimer formed by KCNK1 and KCNK2 is required for rapid glutamate release in response to activation of G-protein coupled receptors, such as F2R and CNR1. Required for normal ion and water transport in the kidney. Contributes to the regulation of the resting membrane potential of pancreatic beta cells. The low channel activity of homodimeric KCNK1 may be due to sumoylation. The low channel activity may be due to rapid internalization from the cell membrane and retention in recycling endosomes. Permeable to monovalent cations with ion selectivity for K(+) &gt; Rb(+) &gt;&gt; NH4(+) &gt;&gt; Cs(+) = Na(+) = Li(+). This is Potassium channel subfamily K member 1 from Oryctolagus cuniculus (Rabbit).